Here is a 124-residue protein sequence, read N- to C-terminus: Salivary protein 15 Iric-3 (124 aa).

Residues 1-22 form the signal peptide; the sequence is MESFVAMKVVCIILLFVIAAEA. Asparagine 82 and asparagine 93 each carry an N-linked (GlcNAc...) asparagine glycan. A CD4-binding region spans residues 105–124; sequence GPNNQTCHKKDECVGYIPGC.

The protein belongs to the salp15 family. Interacts with host CD4. Interacts with host DC-SIGN (CD209). Interacts with Borrelia outer surface protein C (OspC). In terms of tissue distribution, expressed in salivary glands. Detected in fed adult female.

The protein localises to the secreted. Its function is as follows. Salivary tick protein that downregulates host immune system by binding to both dendritic cells, and CD4(+) T cells. Specifically binds to the CD4 coreceptor on T cells. This interaction prevents the activation of the Src kinase, Lck, and its downstream substrate Zap-70, and results in deficient activation of PLCgamma1, the repression of calcium fluxes triggered by T-cell antigen receptor (TCR) ligation, and a subsequent reduction in interleukin-2 production. This salivary protein also binds to DC-SIGN (CD209) on dendritic cells (DC) and activates the Raf-1 kinase/MEK signaling pathway that results in down-regulating expression of pro-inflammatory cytokines. Furthermore, it inhibits T cell proliferation induced by DCs. In addition, it inhibits in vitro keratinocyte inflammation induced by Borrelia burgdorferi or by the major outer surface protein (OspC) of Borrelia. In addition, it downregulates chemokines and monocyte chemoattractant protein 1, as well as several antimicrobial peptides such as defensins, cathelicidin, psoriasin, and RNase 7. Apart from its immunomodulatory activities, it is also associated with protection of Borrelia spirochetes from antibody-mediated killing through its binding to OspC. In vivo, tests on different immune disease animal models show promising therapeutic results, e.g., in inhibiting HIV infection, experimental autoimmune encephalomyelitis, transplantation rejection, and asthma. This chain is Salivary protein 15 Iric-3, found in Ixodes ricinus (Common tick).